Consider the following 413-residue polypeptide: 2,3-bisphosphoglycerate-independent phosphoglycerate mutase (413 aa).

The protein belongs to the BPG-independent phosphoglycerate mutase family. A-PGAM subfamily.

It catalyses the reaction (2R)-2-phosphoglycerate = (2R)-3-phosphoglycerate. It participates in carbohydrate degradation; glycolysis; pyruvate from D-glyceraldehyde 3-phosphate: step 3/5. In terms of biological role, catalyzes the interconversion of 2-phosphoglycerate and 3-phosphoglycerate. The protein is 2,3-bisphosphoglycerate-independent phosphoglycerate mutase of Sulfolobus acidocaldarius (strain ATCC 33909 / DSM 639 / JCM 8929 / NBRC 15157 / NCIMB 11770).